The primary structure comprises 362 residues: Phosphatidylserine decarboxylase proenzyme (362 aa).

The helical transmembrane segment at 26–44 threads the bilayer; sequence YLLTGVTILSFIFMFQYKY. Active-site charge relay system; for autoendoproteolytic cleavage activity residues include D147, H206, and S316. The active-site Schiff-base intermediate with substrate; via pyruvic acid; for decarboxylase activity is the S316. Residue S316 is modified to Pyruvic acid (Ser); by autocatalysis.

Belongs to the phosphatidylserine decarboxylase family. PSD-B subfamily. Eukaryotic type I sub-subfamily. As to quaternary structure, heterodimer of a large membrane-associated beta subunit and a small pyruvoyl-containing alpha subunit. The cofactor is pyruvate. Post-translationally, is synthesized initially as an inactive proenzyme. Formation of the active enzyme involves a self-maturation process in which the active site pyruvoyl group is generated from an internal serine residue via an autocatalytic post-translational modification. Two non-identical subunits are generated from the proenzyme in this reaction, and the pyruvate is formed at the N-terminus of the alpha chain, which is derived from the carboxyl end of the proenzyme. The autoendoproteolytic cleavage occurs by a canonical serine protease mechanism, in which the side chain hydroxyl group of the serine supplies its oxygen atom to form the C-terminus of the beta chain, while the remainder of the serine residue undergoes an oxidative deamination to produce ammonia and the pyruvoyl prosthetic group on the alpha chain. During this reaction, the Ser that is part of the protease active site of the proenzyme becomes the pyruvoyl prosthetic group, which constitutes an essential element of the active site of the mature decarboxylase.

The protein resides in the endoplasmic reticulum membrane. It catalyses the reaction a 1,2-diacyl-sn-glycero-3-phospho-L-serine + H(+) = a 1,2-diacyl-sn-glycero-3-phosphoethanolamine + CO2. The protein operates within phospholipid metabolism; phosphatidylethanolamine biosynthesis; phosphatidylethanolamine from CDP-diacylglycerol: step 2/2. In terms of biological role, catalyzes the formation of phosphatidylethanolamine (PtdEtn) from phosphatidylserine (PtdSer). Plays a central role in phospholipid metabolism and in the interorganelle trafficking of phosphatidylserine. This Plasmodium falciparum protein is Phosphatidylserine decarboxylase proenzyme.